A 372-amino-acid chain; its full sequence is tRNA-specific 2-thiouridylase MnmA (372 aa).

ATP contacts are provided by residues 16 to 23 and Met-42; that span reads GMSGGVDS. Residues 102 to 104 are interaction with target base in tRNA; it reads NPD. The Nucleophile role is filled by Cys-107. A disulfide bridge links Cys-107 with Cys-205. Gly-132 serves as a coordination point for ATP. The segment at 155-157 is interaction with tRNA; the sequence is KDQ. Cys-205 serves as the catalytic Cysteine persulfide intermediate. Residues 317–318 form an interaction with tRNA region; sequence RY.

The protein belongs to the MnmA/TRMU family.

It is found in the cytoplasm. It catalyses the reaction S-sulfanyl-L-cysteinyl-[protein] + uridine(34) in tRNA + AH2 + ATP = 2-thiouridine(34) in tRNA + L-cysteinyl-[protein] + A + AMP + diphosphate + H(+). Functionally, catalyzes the 2-thiolation of uridine at the wobble position (U34) of tRNA, leading to the formation of s(2)U34. The protein is tRNA-specific 2-thiouridylase MnmA of Shewanella frigidimarina (strain NCIMB 400).